We begin with the raw amino-acid sequence, 428 residues long: MNLDQAEITALTKRFETPFYLYDGDFIEAHYRQLRSRTNPAIQFYLSLKANNNIHLAKLFRQWGLGVEVASAGELALARHAGFSAENIIFSGPGKKRSELEIAVQSGIYCIIAESVEELFYIEELAEKENKTARVAIRINPDKSFGSTAIKMGGVPRQFGMDESMLDAVMDAVRSLQFTKFIGIHVYTGTQNLNTDSIIESMKYTVDLGRNIYERYGIVCECINLGGGFGVPYFSHEKALDIGKITRTVSDYVQEARDTRFPQTTFIIESGRYLLAQAAVYVTEVLYRKASKGEVFVIVDGGMHHHAASTFRGRSMRSNYPMEYIPVREDSGRRELEKVTIAGPLCTPEDCLGKDVHVPALYPGDLVCVLNSGAYGLSFSPVHFLGHPTPIEILKRNGSYELIRRKGTADDIVATQLQTESNLLFVDK.

At lysine 49 the chain carries N6-(pyridoxal phosphate)lysine. Pyridoxal 5'-phosphate-binding positions include glycine 228, 269–272 (ESGR), and tyrosine 375. 2 residues coordinate substrate: arginine 272 and tyrosine 375.

This sequence belongs to the Orn/Lys/Arg decarboxylase class-II family. As to quaternary structure, homodimer. Requires pyridoxal 5'-phosphate as cofactor.

It carries out the reaction gamma-L-glutamyl-[BtrI ACP] + H(+) = 4-aminobutanoyl-[BtrI ACP] + CO2. The protein operates within antibiotic biosynthesis; butirosin biosynthesis. In terms of biological role, pyridoxal phosphate-dependent decarboxylase that catalyzes 1 step in the biosynthesis of the side chain of the aminoglycoside antibiotics in the biosynthetic pathway of butirosin. Able to decarboxylate L-ornithine, L-arginine, L-lysine, but not L-glutamate or any D-amino acids. Has low activity with substrates not bound to an acyl-carrier protein. The sequence is that of L-glutamyl-[BtrI acyl-carrier protein] decarboxylase (btrK) from Niallia circulans (Bacillus circulans).